The sequence spans 638 residues: 3D-(3,5/4)-trihydroxycyclohexane-1,2-dione hydrolase (638 aa).

E67 serves as a coordination point for thiamine diphosphate. The thiamine pyrophosphate binding stretch occupies residues 442 to 523; the sequence is SLPGDLQRLW…INIMLFDNSG (82 aa). The Mg(2+) site is built by D494 and N521.

It belongs to the TPP enzyme family. Requires Mg(2+) as cofactor. It depends on thiamine diphosphate as a cofactor.

It catalyses the reaction 3D-3,5/4-trihydroxycyclohexane-1,2-dione + H2O = 5-deoxy-D-glucuronate + H(+). It participates in polyol metabolism; myo-inositol degradation into acetyl-CoA; acetyl-CoA from myo-inositol: step 3/7. Functionally, involved in the cleavage of the C1-C2 bond of 3D-(3,5/4)-trihydroxycyclohexane-1,2-dione (THcHDO) to yield 5-deoxy-glucuronate (5DG). The protein is 3D-(3,5/4)-trihydroxycyclohexane-1,2-dione hydrolase of Listeria monocytogenes serotype 4b (strain F2365).